A 743-amino-acid chain; its full sequence is tRNA(Met) cytidine acetyltransferase TmcA (743 aa).

Residues Gln-216, 241 to 250 (GRGKSASIGL), and Arg-390 each bind ATP. One can recognise an N-acetyltransferase domain in the interval 420-604 (LKIEDVSQEE…YSVIVIRALS (185 aa)). Acetyl-CoA contacts are provided by residues 531–533 (IAV) and 538–544 (QGKGIGS).

This sequence belongs to the RNA cytidine acetyltransferase family. TmcA subfamily.

It is found in the cytoplasm. The catalysed reaction is cytidine(34) in elongator tRNA(Met) + acetyl-CoA + ATP + H2O = N(4)-acetylcytidine(34) in elongator tRNA(Met) + ADP + phosphate + CoA + H(+). In terms of biological role, catalyzes the formation of N(4)-acetylcytidine (ac(4)C) at the wobble position of tRNA(Met), by using acetyl-CoA as an acetyl donor and ATP (or GTP). The polypeptide is tRNA(Met) cytidine acetyltransferase TmcA (Saccharolobus islandicus (strain Y.G.57.14 / Yellowstone #1) (Sulfolobus islandicus)).